The sequence spans 375 residues: Chaperone protein DnaJ (375 aa).

Positions 5–70 (DYYSLLEVER…QKRAAYDRYG (66 aa)) constitute a J domain. A CR-type zinc finger spans residues 135–213 (GKTVDIEIDV…CHGEGRCEKH (79 aa)). Positions 148, 151, 165, 168, 187, 190, 201, and 204 each coordinate Zn(2+). 4 CXXCXGXG motif repeats span residues 148–155 (CDACHGSG), 165–172 (CDTCHGSG), 187–194 (CPVCQGKG), and 201–208 (CPECHGEG).

It belongs to the DnaJ family. In terms of assembly, homodimer. Zn(2+) serves as cofactor.

The protein localises to the cytoplasm. Its function is as follows. Participates actively in the response to hyperosmotic and heat shock by preventing the aggregation of stress-denatured proteins and by disaggregating proteins, also in an autonomous, DnaK-independent fashion. Unfolded proteins bind initially to DnaJ; upon interaction with the DnaJ-bound protein, DnaK hydrolyzes its bound ATP, resulting in the formation of a stable complex. GrpE releases ADP from DnaK; ATP binding to DnaK triggers the release of the substrate protein, thus completing the reaction cycle. Several rounds of ATP-dependent interactions between DnaJ, DnaK and GrpE are required for fully efficient folding. Also involved, together with DnaK and GrpE, in the DNA replication of plasmids through activation of initiation proteins. This is Chaperone protein DnaJ from Zymomonas mobilis subsp. mobilis (strain ATCC 31821 / ZM4 / CP4).